Here is a 466-residue protein sequence, read N- to C-terminus: Asparagine--tRNA ligase (466 aa).

It belongs to the class-II aminoacyl-tRNA synthetase family. As to quaternary structure, homodimer.

It is found in the cytoplasm. It carries out the reaction tRNA(Asn) + L-asparagine + ATP = L-asparaginyl-tRNA(Asn) + AMP + diphosphate + H(+). This is Asparagine--tRNA ligase from Shewanella pealeana (strain ATCC 700345 / ANG-SQ1).